Consider the following 771-residue polypeptide: MARIMSWHYGKAITLFVCLGPVALSLDTFPDCSSGPLSKLAVCDTSLDVTTRARSLVNAMTFEEKVNNTQYNSPGVPRLGLPAYNWWSEALHGVAGSPGVEFADSGPFSYATSFPQPILLGATFDDDLIKQVATVVSTEGRAFGNAGRAGLDFWTPNINPFRDARWGRGQETPGEDPLHVSRYVYHLVDGLQNGIGPANPKVVATCKHFAAYDLEDWNGVVRHSFNAEVSTQDLSEFYLPPFKSCARDAKVDAVMCSYNALNGVPACADSYLLQTILREHWKWDEPGHWITGDCGAIDDIYNGHNYTKTPAEAAATALNAGTDLDCGTVFPKYLGQAADEGLYTNKTLDKALVRLYSSLVKLGYFDPAEDQPYRSIGWKDVDSPAAEALAHKAAVEGIVLLKNDKTLPLKAKGTLALIGPYANATKQMQGNYEGPPKYIRTLLWAATQAGYDVKYVAGTAINANSTAGFDAALSAAKQADVVVYAGGIDNTIEAEGHDRTTIVWPGNQLDLIDQLSKIGKPLVVVQFGGGQVDDSSLLSNPHVNALLWTGYPSQEGGSAIFDILTGKTAPAGRLPVTQYPADYVNQVPLTDMALRPGSNTPGRTYRWYDKAVLPFGFGLHYTTFKISWPRRALGPYDTAALVSRSPKNVPIDRAAFDTFHIQVTNTGKTTSDYVALLFLKTIDAGPKPYPLKTLVGYTRAKQIKPGEKRSVDIKVSLGSLARTAENGDLVLYPGRYTLEVDVGENQYPTASFTVKGKEAILDSFPQPPETR.

Positions 1–25 (MARIMSWHYGKAITLFVCLGPVALS) are cleaved as a signal peptide. N-linked (GlcNAc...) asparagine glycosylation is present at asparagine 67. The active site involves aspartate 293. Residues asparagine 305, asparagine 345, asparagine 423, and asparagine 464 are each glycosylated (N-linked (GlcNAc...) asparagine).

It belongs to the glycosyl hydrolase 3 family.

The protein resides in the secreted. The catalysed reaction is Hydrolysis of (1-&gt;4)-beta-D-xylans, to remove successive D-xylose residues from the non-reducing termini.. The protein operates within glycan degradation; xylan degradation. Functionally, xylan 1,4-beta-xylosidase involved in the hydrolysis of xylan, a major structural heterogeneous polysaccharide found in plant biomass representing the second most abundant polysaccharide in the biosphere, after cellulose. The polypeptide is Probable exo-1,4-beta-xylosidase xlnD (xlnD) (Neosartorya fischeri (strain ATCC 1020 / DSM 3700 / CBS 544.65 / FGSC A1164 / JCM 1740 / NRRL 181 / WB 181) (Aspergillus fischerianus)).